A 732-amino-acid chain; its full sequence is Aldehyde oxidoreductase molybdenum-binding subunit PaoC (732 aa).

Mo-molybdopterin cytosine dinucleotide is bound by residues 241–242 (GF), 468–470 (IGT), 511–512 (GA), 615–621 (RILNPKT), Gln625, and 688–691 (KGVG). Residue Glu692 is the Proton acceptor of the active site.

This sequence belongs to the xanthine dehydrogenase family. Heterotrimer composed of PaoA, PaoB and PaoC. The cofactor is Mo-molybdopterin cytosine dinucleotide.

The protein localises to the periplasm. It carries out the reaction an aldehyde + A + H2O = a carboxylate + AH2 + H(+). Its activity is regulated as follows. The complex requires PaoD for activity. Its function is as follows. Oxidizes aldehydes to the corresponding carboxylic acids with a preference for aromatic aldehydes. It might play a role in the detoxification of aldehydes to avoid cell damage. The chain is Aldehyde oxidoreductase molybdenum-binding subunit PaoC from Escherichia coli (strain K12).